The primary structure comprises 195 residues: Pyruvoyl-dependent arginine decarboxylase AaxB (195 aa).

S53 is modified (pyruvic acid (Ser)).

The protein belongs to the pyruvoyl-dependent arginine decarboxylase family. In terms of assembly, trimer of an alpha-beta dimer. Pyruvate serves as cofactor.

The protein resides in the cytoplasm. It carries out the reaction L-arginine + H(+) = agmatine + CO2. Part of the AaxABC system, catalyzes the decarboxylation of L-arginine. The arginine uptake by the bacterium in the macrophage may be a virulence factor against the host innate immune response. The protein is Pyruvoyl-dependent arginine decarboxylase AaxB (aaxB) of Chlamydia trachomatis serovar L2 (strain ATCC VR-902B / DSM 19102 / 434/Bu).